The primary structure comprises 589 residues: MKSKIHHQPNGSNNGVVSSNDNGCRSESPSPPLSPNRRVLRRQRRQTLLRASSFSLRRNLRYLLLLPMIYASGLLMCVGPFSGLVGWVYVPGSVYRSPEIYRKLKDDIFSDNSTALELSSVWKFKRRPKMPKPCPNSTVSSHFGLNRESSALAPSSGYLIVEANGGLNQQRSAICNAVAVAGLLNAVLVIPRFEFHAIWKDSSNFGDIYDEDHFISSLEGYVKIVRDVPDEIMTRFSYNVSSIPTIRVQAWATVNYYNGEVYPVLKEHGVIRITPFANRLAMSVPPYIQLLRCIANYKALKFSSPISTLAEKLVDRMVEKSSATGGKYVSVHLRFEEDMVAFSCCLYEGGRAEKSEMDVIRQKSWKGKFKRRDRVIRPDLNRVNGKCPLTPLEVGMMLRGMGFDNNTSIYLASGRIYQPEKHLAPLQEMFPRLYTKESLATPEELAPFQGYSSRMAALDYTVSLLSEVFVTTQGGNFPHFLMGHRRFLFGGHAKTVIPDKPKLVLLLQDMEMRWEVFKKEMKLMLGESDRKGVMVPRVRKINRKTSIYTYPLPECECIFHLSSNFSNTGNILSLGALHPSSNLISSARL.

A disordered region spans residues Met1–Arg37. Positions Asn10–Gly23 are enriched in low complexity. A helical; Signal-anchor for type II membrane protein membrane pass occupies residues Met68–Val88. Asn112, Asn136, and Asn239 each carry an N-linked (GlcNAc...) asparagine glycan. Position 332-334 (His332–Arg334) interacts with substrate. 3 N-linked (GlcNAc...) asparagine glycosylation sites follow: Asn405, Asn406, and Asn564.

The protein belongs to the glycosyltransferase GT106 family.

The protein resides in the membrane. It functions in the pathway glycan metabolism. The protein is O-fucosyltransferase 11 of Arabidopsis thaliana (Mouse-ear cress).